We begin with the raw amino-acid sequence, 291 residues long: 4-hydroxy-tetrahydrodipicolinate synthase (291 aa).

Residue threonine 45 coordinates pyruvate. Tyrosine 133 acts as the Proton donor/acceptor in catalysis. Lysine 161 functions as the Schiff-base intermediate with substrate in the catalytic mechanism. Isoleucine 203 contributes to the pyruvate binding site.

It belongs to the DapA family. Homotetramer; dimer of dimers.

The protein localises to the cytoplasm. The enzyme catalyses L-aspartate 4-semialdehyde + pyruvate = (2S,4S)-4-hydroxy-2,3,4,5-tetrahydrodipicolinate + H2O + H(+). The protein operates within amino-acid biosynthesis; L-lysine biosynthesis via DAP pathway; (S)-tetrahydrodipicolinate from L-aspartate: step 3/4. Its function is as follows. Catalyzes the condensation of (S)-aspartate-beta-semialdehyde [(S)-ASA] and pyruvate to 4-hydroxy-tetrahydrodipicolinate (HTPA). The sequence is that of 4-hydroxy-tetrahydrodipicolinate synthase from Acidithiobacillus ferrooxidans (strain ATCC 23270 / DSM 14882 / CIP 104768 / NCIMB 8455) (Ferrobacillus ferrooxidans (strain ATCC 23270)).